Reading from the N-terminus, the 5875-residue chain is Probable E3 ubiquitin-protein ligase DDB_G0283893 (5875 aa).

Disordered stretches follow at residues 17–64 (DNNN…QPPE), 164–185 (NNNNNNDNNSNNKTDDNNQSNN), 232–276 (DSNN…TTTS), 302–342 (PSFK…CGNG), 642–693 (TTTT…SPPI), 716–740 (SIRSSSNKVNEGTPKSSTTTTTTNA), 1081–1101 (ITPTNTTTTTTTTTPSTTSIP), 1291–1367 (DGWE…KEST), 1806–1851 (QESE…SSPP), 1952–1982 (KKPSSDQQHHSGGCHHSNHHHHHHHSRKDEV), 2008–2036 (EDEDELQYLSEDEKVVNGNENTGEEDDEE), 2109–2203 (KALK…TGSG), 2893–2930 (DSDDSDDEFPTVDENVTSSGLSTSAGGSGGGVAGTNDS), 3083–3119 (TSPSSSKGKSSSASASSSSSTTTATSTLPSNTQSGSN), and 3195–3214 (LLPPPSSSSNENVVDNDNTN). Residues 18–52 (NNNNNNNNNNNNNNNNNNNNNNNNNNNSNNNNNKN) are compositionally biased toward low complexity. Positions 237 to 249 (DNKENKKEDKESS) are enriched in basic and acidic residues. 3 stretches are compositionally biased toward low complexity: residues 250 to 276 (KPIASSPIPITTTNIEKPTIATTTTTS), 317 to 333 (TSTITTQPLPSSTITQP), and 642 to 656 (TTTTTATTTTTTTTT). Residues 657 to 669 (NESIPMETTRSST) show a composition bias toward polar residues. Residues 670 to 693 (PIPIVNNNNNNNDSKSNSKKSPPI) show a composition bias toward low complexity. The segment covering 716-725 (SIRSSSNKVN) has biased composition (polar residues). Residues 728–740 (TPKSSTTTTTTNA) show a composition bias toward low complexity. Over residues 1297–1330 (FNDDDDEEEDEEEEEEMDEDDSENDEDEDSEESE) the composition is skewed to acidic residues. A coiled-coil region spans residues 1300–1328 (DDDEEEDEEEEEEMDEDDSENDEDEDSEE). Low complexity-rich tracts occupy residues 1347–1363 (TTTTTAAAATTTATATT) and 1838–1851 (SNSSPALTASSSPP). The segment covering 1963-1977 (GGCHHSNHHHHHHHS) has biased composition (basic residues). Residues 2042 to 2113 (KVCTYTFTKN…KGNPCKALKP (72 aa)) form a UBR-type zinc finger. Low complexity-rich tracts occupy residues 2118 to 2168 (PPKQ…TNTN) and 2178 to 2203 (SSSSSNSSPSFNNNNNNNNNGTTGSG). Over residues 2893 to 2903 (DSDDSDDEFPT) the composition is skewed to acidic residues. A compositionally biased stretch (low complexity) spans 2908–2917 (VTSSGLSTSA). The segment covering 3201-3211 (SSSNENVVDND) has biased composition (low complexity). A ZZ-type zinc finger spans residues 3226–3280 (EVLFSCDLCNINPITGKRWNCSNCGDFDLCNQCYQNPEKDHPKDHIFKEFIIDEP). 8 residues coordinate Zn(2+): Cys-3231, Cys-3234, Cys-3246, Cys-3249, Cys-3255, Cys-3258, His-3266, and His-3270. Disordered regions lie at residues 3282–3312 (KDGDEKESTNEPPQQQKQQDQQLQQDLQDDS), 3326–3359 (LNNNNNNNNNNESMDTSTLTTTTTTTNKTTPTTN), and 3754–3776 (SSTSQDTQQESSNNNNNNNSNDI). Composition is skewed to low complexity over residues 3295-3307 (QQQKQQDQQLQQD) and 3327-3358 (NNNNNNNNNNESMDTSTLTTTTTTTNKTTPTT). Residues 3313 to 3332 (EYDEELKIAISMSLNNNNNN) form the UIM domain. A compositionally biased stretch (polar residues) spans 3754–3763 (SSTSQDTQQE). The segment covering 3764–3774 (SSNNNNNNNSN) has biased composition (low complexity). Residues 4118–4146 (IENQEDHKRAIQTIEKESENAHKKYQRLI) are a coiled coil. Low complexity predominate over residues 4182–4222 (NTSTNSTGSNNQSINSSSGNISTNSSSSSSSSFGISNQSSS). Disordered regions lie at residues 4182–4237 (NTST…GGVI), 4295–4323 (FISGGGQPSSNDKQQQQQQQQQQSSRQCP), and 4616–4671 (KILS…FDND). Over residues 4223-4236 (GNGGGGVGSGGGGV) the composition is skewed to gly residues. Residues 4308–4317 (QQQQQQQQQQ) show a composition bias toward low complexity. Residues 4585-4618 (QIQQQIALQQQQIQQQIQQQQQQLNESVSGLKIL) adopt a coiled-coil conformation. Composition is skewed to low complexity over residues 4619–4635 (SPSSSSSSPSGVGATGS) and 4645–4659 (SSGSSVSGSGSISSS). The tract at residues 5357-5870 (PALPFVLVLL…EYLLKLYKSV (514 aa)) is UBR4 E3 catalytic module. The segment at 5476–5620 (GFTCMVCREG…WVNLNNISRV (145 aa)) adopts a HemiRING-type zinc-finger fold. Residues Cys-5479, Cys-5482, His-5554, and Cys-5557 each coordinate Zn(2+). The UZI domain maps to 5623 to 5870 (PKFRILSHDL…EYLLKLYKSV (248 aa)). Residues 5819-5846 (QVDVKELLNCFENELKEFQDEMEFFDDE) are a coiled coil.

The protein belongs to the UBR4 family.

It functions in the pathway protein modification; protein ubiquitination. In terms of biological role, probable E3 ubiquitin-protein ligase. In Dictyostelium discoideum (Social amoeba), this protein is Probable E3 ubiquitin-protein ligase DDB_G0283893.